A 485-amino-acid chain; its full sequence is uncharacterized protein (485 aa).

The Cytoplasmic portion of the chain corresponds to 1–30; that stretch reads MFSWANIGSNEYLPLKNDRKAYLNQWAKRS. The chain crosses the membrane as a helical span at residues 31-51; sequence GLAIAAICILGILILAIVKLF. The Extracellular segment spans residues 52 to 485; that stretch reads CFKAIIFPIV…DIEQAYSKLI (434 aa). N67 is a glycosylation site (N-linked (GlcNAc...) asparagine). Residues 74–404 form a phosphodiesterase region; that stretch reads STVIVISLDG…YEPLGVHGYD (331 aa). T118 (nucleophile) is an active-site residue. N306, N338, N453, and N467 each carry an N-linked (GlcNAc...) asparagine glycan.

The protein belongs to the nucleotide pyrophosphatase/phosphodiesterase family.

Its subcellular location is the membrane. This is an uncharacterized protein from Schizosaccharomyces pombe (strain 972 / ATCC 24843) (Fission yeast).